Reading from the N-terminus, the 412-residue chain is Serine/threonine transporter SstT (412 aa).

10 consecutive transmembrane segments (helical) span residues 16–36, 44–64, 82–102, 115–135, 141–161, 179–199, 217–237, 298–318, 330–350, and 357–377; these read LVAQIVVGLLAGALLALFLPG, LGDLFVQALKAVAPVLVFVLV, IIVLYALGTLSAAAVAVLASF, TDVIPPAGVGAVLNTLLFNIV, ALLNGNFIGILAWAIGLGFAF, VTLIVKVVIRFAPLGVFGLVA, LLVLVGAMLFMALVMNPLIVF, MGGAAITITVLTLAAVNTLGI, LLAAVCACGASGVAGGSLLLI, and FGISNDLAMQVVAVGFIIGVV.

This sequence belongs to the dicarboxylate/amino acid:cation symporter (DAACS) (TC 2.A.23) family.

It is found in the cell inner membrane. It carries out the reaction L-serine(in) + Na(+)(in) = L-serine(out) + Na(+)(out). The catalysed reaction is L-threonine(in) + Na(+)(in) = L-threonine(out) + Na(+)(out). Its function is as follows. Involved in the import of serine and threonine into the cell, with the concomitant import of sodium (symport system). The polypeptide is Serine/threonine transporter SstT (Stutzerimonas stutzeri (strain A1501) (Pseudomonas stutzeri)).